Reading from the N-terminus, the 392-residue chain is Methylthioribose-1-phosphate isomerase (392 aa).

The active-site Proton donor is D268.

The protein belongs to the eIF-2B alpha/beta/delta subunits family. MtnA subfamily.

The protein localises to the cytoplasm. Its subcellular location is the nucleus. It catalyses the reaction 5-(methylsulfanyl)-alpha-D-ribose 1-phosphate = 5-(methylsulfanyl)-D-ribulose 1-phosphate. It functions in the pathway amino-acid biosynthesis; L-methionine biosynthesis via salvage pathway; L-methionine from S-methyl-5-thio-alpha-D-ribose 1-phosphate: step 1/6. In terms of biological role, catalyzes the interconversion of methylthioribose-1-phosphate (MTR-1-P) into methylthioribulose-1-phosphate (MTRu-1-P). This Ajellomyces capsulatus (strain G186AR / H82 / ATCC MYA-2454 / RMSCC 2432) (Darling's disease fungus) protein is Methylthioribose-1-phosphate isomerase.